The following is a 361-amino-acid chain: DNA replication and repair protein RecF (361 aa).

30–37 lines the ATP pocket; it reads GPNGSGKT.

This sequence belongs to the RecF family.

The protein localises to the cytoplasm. The RecF protein is involved in DNA metabolism; it is required for DNA replication and normal SOS inducibility. RecF binds preferentially to single-stranded, linear DNA. It also seems to bind ATP. The protein is DNA replication and repair protein RecF of Yersinia pseudotuberculosis serotype O:1b (strain IP 31758).